Here is a 200-residue protein sequence, read N- to C-terminus: dTTP/UTP pyrophosphatase (200 aa).

The active-site Proton acceptor is the Asp73.

It belongs to the Maf family. YhdE subfamily. The cofactor is a divalent metal cation.

Its subcellular location is the cytoplasm. It carries out the reaction dTTP + H2O = dTMP + diphosphate + H(+). It catalyses the reaction UTP + H2O = UMP + diphosphate + H(+). In terms of biological role, nucleoside triphosphate pyrophosphatase that hydrolyzes dTTP and UTP. May have a dual role in cell division arrest and in preventing the incorporation of modified nucleotides into cellular nucleic acids. This is dTTP/UTP pyrophosphatase from Chromohalobacter salexigens (strain ATCC BAA-138 / DSM 3043 / CIP 106854 / NCIMB 13768 / 1H11).